Consider the following 133-residue polypeptide: Holo-[acyl-carrier-protein] synthase (133 aa).

Positions 8 and 57 each coordinate Mg(2+).

It belongs to the P-Pant transferase superfamily. AcpS family. Mg(2+) serves as cofactor.

Its subcellular location is the cytoplasm. The enzyme catalyses apo-[ACP] + CoA = holo-[ACP] + adenosine 3',5'-bisphosphate + H(+). Transfers the 4'-phosphopantetheine moiety from coenzyme A to a Ser of acyl-carrier-protein. In Bartonella bacilliformis (strain ATCC 35685 / KC583 / Herrer 020/F12,63), this protein is Holo-[acyl-carrier-protein] synthase.